A 293-amino-acid polypeptide reads, in one-letter code: Acetylglutamate kinase (293 aa).

Substrate-binding positions include 67-68 (GG), Arg-89, and Asn-190.

It belongs to the acetylglutamate kinase family. ArgB subfamily.

The protein localises to the cytoplasm. It catalyses the reaction N-acetyl-L-glutamate + ATP = N-acetyl-L-glutamyl 5-phosphate + ADP. It participates in amino-acid biosynthesis; L-arginine biosynthesis; N(2)-acetyl-L-ornithine from L-glutamate: step 2/4. Catalyzes the ATP-dependent phosphorylation of N-acetyl-L-glutamate. This chain is Acetylglutamate kinase, found in Nitrosospira multiformis (strain ATCC 25196 / NCIMB 11849 / C 71).